The primary structure comprises 198 residues: N-acetyltransferase 9-like protein (198 aa).

The 173-residue stretch at 14–186 (IILVPYKEKH…SNNFTNLTAD (173 aa)) folds into the N-acetyltransferase domain.

Belongs to the acetyltransferase family. GNAT subfamily.

The sequence is that of N-acetyltransferase 9-like protein (nat9) from Nematostella vectensis (Starlet sea anemone).